Reading from the N-terminus, the 627-residue chain is tRNA uridine 5-carboxymethylaminomethyl modification enzyme MnmG (627 aa).

Residues 13-18 (GGGHAG), valine 125, and serine 180 each bind FAD. Residue 274-288 (GPRYCPSIEDKVVRF) coordinates NAD(+). FAD is bound at residue glutamine 371.

The protein belongs to the MnmG family. In terms of assembly, homodimer. Heterotetramer of two MnmE and two MnmG subunits. Requires FAD as cofactor.

The protein resides in the cytoplasm. Its function is as follows. NAD-binding protein involved in the addition of a carboxymethylaminomethyl (cmnm) group at the wobble position (U34) of certain tRNAs, forming tRNA-cmnm(5)s(2)U34. The protein is tRNA uridine 5-carboxymethylaminomethyl modification enzyme MnmG of Francisella tularensis subsp. tularensis (strain WY96-3418).